The primary structure comprises 358 residues: Small ribosomal subunit biogenesis GTPase RsgA (358 aa).

The CP-type G domain occupies 76–234 (STEIDRPAVA…LADSPGFNQP (159 aa)). GTP-binding positions include 125 to 128 (NKID) and 176 to 184 (GPSGVGKSS). Zn(2+) contacts are provided by C259, C264, H266, and C272. The tract at residues 319–358 (TYEPKLANKKYRRPSRRGKNQDQERYENKTLQDIYNDDSE) is disordered. Residues 325-336 (ANKKYRRPSRRG) show a composition bias toward basic residues. Basic and acidic residues predominate over residues 337 to 348 (KNQDQERYENKT).

Belongs to the TRAFAC class YlqF/YawG GTPase family. RsgA subfamily. Monomer. Associates with 30S ribosomal subunit, binds 16S rRNA. Zn(2+) serves as cofactor.

Its subcellular location is the cytoplasm. One of several proteins that assist in the late maturation steps of the functional core of the 30S ribosomal subunit. Helps release RbfA from mature subunits. May play a role in the assembly of ribosomal proteins into the subunit. Circularly permuted GTPase that catalyzes slow GTP hydrolysis, GTPase activity is stimulated by the 30S ribosomal subunit. This Microcystis aeruginosa (strain NIES-843 / IAM M-2473) protein is Small ribosomal subunit biogenesis GTPase RsgA.